A 91-amino-acid polypeptide reads, in one-letter code: C-C motif chemokine 5 (91 aa).

An N-terminal signal peptide occupies residues 1–23 (MKVSATAFAVLLMAAALCAPASA). 2 cysteine pairs are disulfide-bonded: Cys33–Cys57 and Cys34–Cys73.

It belongs to the intercrine beta (chemokine CC) family.

It localises to the secreted. In terms of biological role, chemoattractant for blood monocytes, memory T-helper cells and eosinophils. Causes the release of histamine from basophils and activates eosinophils. May activate several chemokine receptors including CCR1, CCR3, CCR4 and CCR5. May also be an agonist of the G protein-coupled receptor GPR75. Together with GPR75, may play a role in neuron survival through activation of a downstream signaling pathway involving the PI3, Akt and MAP kinases. By activating GPR75 may also play a role in insulin secretion by islet cells. The polypeptide is C-C motif chemokine 5 (CCL5) (Bos taurus (Bovine)).